The following is a 518-amino-acid chain: Glutamate--cysteine ligase (518 aa).

Belongs to the glutamate--cysteine ligase type 1 family. Type 1 subfamily.

It carries out the reaction L-cysteine + L-glutamate + ATP = gamma-L-glutamyl-L-cysteine + ADP + phosphate + H(+). It functions in the pathway sulfur metabolism; glutathione biosynthesis; glutathione from L-cysteine and L-glutamate: step 1/2. The protein is Glutamate--cysteine ligase of Salmonella arizonae (strain ATCC BAA-731 / CDC346-86 / RSK2980).